We begin with the raw amino-acid sequence, 477 residues long: Metallopeptidase AprA (477 aa).

The signal sequence occupies residues 1–20 (MSKAKDKAIVSAAQASTAYS). Position 183 (histidine 183) interacts with Zn(2+). The active site involves glutamate 184. 2 residues coordinate Zn(2+): histidine 187 and histidine 193. The Ca(2+) site is built by arginine 264, glycine 266, threonine 268, aspartate 296, glycine 298, glycine 299, aspartate 301, threonine 338, glutamate 340, glycine 345, glycine 347, aspartate 349, asparagine 354, alanine 356, asparagine 358, glycine 362, glycine 363, alanine 364, glycine 365, aspartate 367, glycine 371, alanine 372, glycine 373, glycine 374, aspartate 376, glycine 380, glycine 381, alanine 382, glycine 383, aspartate 385, aspartate 394, aspartate 401, aspartate 411, aspartate 453, serine 455, and aspartate 461. Hemolysin-type calcium-binding repeat units follow at residues 343-360 (FGGAGNDLIIGNNAANVI), 361-378 (KGGAGNDLIYGAGGADQL), and 379-391 (WGGAGNDTFVFGA).

The protein belongs to the peptidase M10B family. Ca(2+) serves as cofactor. Zn(2+) is required as a cofactor.

The protein resides in the secreted. With respect to regulation, is completely inhibited by the metal cation chelators 1,10-phenanthroline and EDTA, but PMSF, pepstatin A and E-64 have no effect on activity. Peptidase able to cleave azocasein and the milk substrates beta-casein and Na-caseinate. Can withstand UHT processing of milk, and is able to spoil UHT milk over the storage period. The protein is Metallopeptidase AprA of Pseudomonas marginalis (Pseudomonas panacis).